The sequence spans 104 residues: Inner membrane protein YjcH (104 aa).

Topologically, residues 1–24 (MNGTIYQRIEDNAHFRELVEKRQR) are cytoplasmic. Residues 25-47 (FATILSIIMLAVYIGFILLIAFA) traverse the membrane as a helical segment. Residues 48–61 (PGWLGTPLNPNTSV) are Periplasmic-facing. Residues 62-84 (TRGIPIGVGVIVISFVLTGIYIW) traverse the membrane as a helical segment. Over 85 to 104 (RANGEFDRLNNEVLHEVQAS) the chain is Cytoplasmic.

The protein localises to the cell inner membrane. The sequence is that of Inner membrane protein YjcH (yjcH) from Escherichia coli (strain K12).